A 358-amino-acid polypeptide reads, in one-letter code: Variant-surface-glycoprotein phospholipase C (358 aa).

The PI-PLC X-box domain occupies I25–R198.

Monomer. The N-terminus is blocked.

The protein resides in the membrane. It carries out the reaction a 6-(alpha-D-glucosaminyl)-1-(1,2-diacyl-sn-glycero-3-phospho)-1D-myo-inositol = 6-(alpha-D-glucosaminyl)-1D-myo-inositol 1,2-cyclic phosphate + a 1,2-diacyl-sn-glycerol. Its function is as follows. By hydrolysis of the attached glycolipid, releases soluble variant surface glycoprotein containing phosphoinositol from the cell wall of T.brucei after cell lysis. It also cleaves similar membrane anchors on some mammalian proteins. VSG lipase may play a role in processes such as parasite differentiation or antigenic variation. The sequence is that of Variant-surface-glycoprotein phospholipase C from Trypanosoma brucei brucei.